The primary structure comprises 132 residues: Small ribosomal subunit protein uS8 (132 aa).

It belongs to the universal ribosomal protein uS8 family. Part of the 30S ribosomal subunit. Contacts proteins S5 and S12.

One of the primary rRNA binding proteins, it binds directly to 16S rRNA central domain where it helps coordinate assembly of the platform of the 30S subunit. This is Small ribosomal subunit protein uS8 from Streptococcus equi subsp. equi (strain 4047).